We begin with the raw amino-acid sequence, 282 residues long: E3 ubiquitin-protein ligase SIAH1 (282 aa).

Residues 1-17 (MSRQTATALPTGTSKCP) are compositionally biased toward polar residues. The disordered stretch occupies residues 1 to 22 (MSRQTATALPTGTSKCPPSQRV). Position 19 is a phosphoserine; by ATM and ATR (serine 19). The segment at 41-76 (CPVCFDYVLPPILQCQSGHLVCSNCRPKLTCCPTCR) adopts an RING-type zinc-finger fold. Residues 90–282 (VANSVLFPCK…LGINVTISMC (193 aa)) are SBD. The SIAH-type zinc-finger motif lies at 93-153 (SVLFPCKYAS…VMPHLMHQHK (61 aa)). Zn(2+)-binding residues include cysteine 98, cysteine 105, histidine 117, cysteine 121, cysteine 128, cysteine 135, histidine 147, and histidine 152.

It belongs to the SINA (Seven in absentia) family. In terms of assembly, homodimer. Interacts with group 1 glutamate receptors GRM1 and GRM5. Interacts with DAB1, which may inhibit its activity. Interacts with UBE2E2. Interacts with PEG3. Interacts with GAPDH; leading to stabilize SIAH1. Component of some large E3 complex composed of UBE2D1, SIAH1, CACYBP/SIP, SKP1, APC and TBL1X. Interacts with UBE2I. Interacts with alpha-tubulin. Interacts with PEG10, which may inhibit its activity. Interacts with KHDRBS3. Interacts with SNCAIP. Interacts with HIPK2; the interaction is promoted by DAZAP2 and results in SIAH1-mediated ubiquitination and subsequent proteasomal degradation of HIPK2. Interacts with DAZAP2; the interaction is decreased following phosphorylation of DAZAP2 by HIPK2. Interacts with Bassoon/BSN and Piccolo/PLCO; these interactions negatively regulate SIAH1 E3 ligase activity. Interacts with DCC. Interacts with AXIN1; catalyzes AXIN1 ubiquitination and subsequent proteasome-mediated ubiquitin-dependent degradation. In terms of processing, phosphorylated on Ser-19 by ATM and ATR. This phosphorylation disrupts SIAH1 interaction with HIPK2, and subsequent proteasomal degradation of HIPK2. In terms of tissue distribution, widely expressed at a low level. Down-regulated in advanced hepatocellular carcinomas.

It is found in the cytoplasm. The protein localises to the nucleus. The catalysed reaction is S-ubiquitinyl-[E2 ubiquitin-conjugating enzyme]-L-cysteine + [acceptor protein]-L-lysine = [E2 ubiquitin-conjugating enzyme]-L-cysteine + N(6)-ubiquitinyl-[acceptor protein]-L-lysine.. It participates in protein modification; protein ubiquitination. Inhibited by interaction with SNCAIP (isoform 2, but not isoform 1). May be inhibited by interaction with PEG10. In terms of biological role, E3 ubiquitin-protein ligase that mediates ubiquitination and subsequent proteasomal degradation of target proteins. E3 ubiquitin ligases accept ubiquitin from an E2 ubiquitin-conjugating enzyme in the form of a thioester and then directly transfers the ubiquitin to targeted substrates. Mediates E3 ubiquitin ligase activity either through direct binding to substrates or by functioning as the essential RING domain subunit of larger E3 complexes. Triggers the ubiquitin-mediated degradation of many substrates, including proteins involved in transcription regulation (ELL2, MYB, POU2AF1, PML and RBBP8), a cell surface receptor (DCC), the cell-surface receptor-type tyrosine kinase FLT3, the cytoplasmic signal transduction molecules (KLF10/TIEG1 and NUMB), an antiapoptotic protein (BAG1), a microtubule motor protein (KIF22), a protein involved in synaptic vesicle function in neurons (SYP), a structural protein (CTNNB1) and SNCAIP. Confers constitutive instability to HIPK2 through proteasomal degradation. It is thereby involved in many cellular processes such as apoptosis, tumor suppression, cell cycle, axon guidance, transcription regulation, spermatogenesis and TNF-alpha signaling. Has some overlapping function with SIAH2. Induces apoptosis in cooperation with PEG3. Upon nitric oxid (NO) generation that follows apoptotic stimulation, interacts with S-nitrosylated GAPDH, mediating the translocation of GAPDH to the nucleus. GAPDH acts as a stabilizer of SIAH1, facilitating the degradation of nuclear proteins. Mediates ubiquitination and degradation of EGLN2 and EGLN3 in response to the unfolded protein response (UPR), leading to their degradation and subsequent stabilization of ATF4. Also part of the Wnt signaling pathway in which it mediates the Wnt-induced ubiquitin-mediated proteasomal degradation of AXIN1. The polypeptide is E3 ubiquitin-protein ligase SIAH1 (SIAH1) (Homo sapiens (Human)).